The sequence spans 420 residues: Tryptophan synthase beta chain (420 aa).

Lysine 100 carries the N6-(pyridoxal phosphate)lysine modification.

The protein belongs to the TrpB family. In terms of assembly, tetramer of two alpha and two beta chains. Pyridoxal 5'-phosphate serves as cofactor.

It catalyses the reaction (1S,2R)-1-C-(indol-3-yl)glycerol 3-phosphate + L-serine = D-glyceraldehyde 3-phosphate + L-tryptophan + H2O. Its pathway is amino-acid biosynthesis; L-tryptophan biosynthesis; L-tryptophan from chorismate: step 5/5. In terms of biological role, the beta subunit is responsible for the synthesis of L-tryptophan from indole and L-serine. This is Tryptophan synthase beta chain from Pyrobaculum islandicum (strain DSM 4184 / JCM 9189 / GEO3).